The sequence spans 129 residues: MAKEATRVRRRERKNIVSGVAHVNSTFNNTMITITDAQGNTISWSSAGTMGFKGSRKSTPYAAQMAAEDCARKAAEHGMRTLEVEVSGPGSGRESALRALQAAGFTVTSIRDVTPIPHNGCRPRKRRRV.

It belongs to the universal ribosomal protein uS11 family. In terms of assembly, part of the 30S ribosomal subunit. Interacts with proteins S7 and S18. Binds to IF-3.

Functionally, located on the platform of the 30S subunit, it bridges several disparate RNA helices of the 16S rRNA. Forms part of the Shine-Dalgarno cleft in the 70S ribosome. This chain is Small ribosomal subunit protein uS11, found in Methylocella silvestris (strain DSM 15510 / CIP 108128 / LMG 27833 / NCIMB 13906 / BL2).